The sequence spans 132 residues: Ribosome-binding factor A (132 aa).

The segment at 113-132 (EANSTRAKDDDEADTPAKDD) is disordered.

It belongs to the RbfA family. As to quaternary structure, monomer. Binds 30S ribosomal subunits, but not 50S ribosomal subunits or 70S ribosomes.

Its subcellular location is the cytoplasm. Functionally, one of several proteins that assist in the late maturation steps of the functional core of the 30S ribosomal subunit. Associates with free 30S ribosomal subunits (but not with 30S subunits that are part of 70S ribosomes or polysomes). Required for efficient processing of 16S rRNA. May interact with the 5'-terminal helix region of 16S rRNA. The sequence is that of Ribosome-binding factor A from Burkholderia cenocepacia (strain HI2424).